We begin with the raw amino-acid sequence, 32 residues long: uncharacterized protein (32 aa).

This is an uncharacterized protein from Saccharolobus islandicus (Sulfolobus islandicus).